A 372-amino-acid chain; its full sequence is Cytochrome b (372 aa).

4 consecutive transmembrane segments (helical) span residues 25-45 (FGSMLLTCLMLQILTGFFLAI), 69-90 (WIMQNLHAISASLFFICVYIHI), 105-125 (WLSGMTLLVFLMATAFFGYVL), and 170-190 (FFALHFILPFVIISLSSIHIM). Residues His75 and His89 each contribute to the heme b site. Heme b is bound by residues His174 and His188. An a ubiquinone-binding site is contributed by His193. The next 4 helical transmembrane spans lie at 218–238 (YKDMLMITTMITLLFLILSFS), 280–300 (LGGTLALLLSVVILTTAPFTH), 312–332 (LSQILFWTFIATFITITWTAS), and 339–358 (FILISQTTSIFYFSFFIMAP).

Belongs to the cytochrome b family. The cytochrome bc1 complex contains 3 respiratory subunits (MT-CYB, CYC1 and UQCRFS1), 2 core proteins (UQCRC1 and UQCRC2) and probably 6 low-molecular weight proteins. Heme b serves as cofactor.

The protein localises to the mitochondrion inner membrane. Component of the ubiquinol-cytochrome c reductase complex (complex III or cytochrome b-c1 complex) that is part of the mitochondrial respiratory chain. The b-c1 complex mediates electron transfer from ubiquinol to cytochrome c. Contributes to the generation of a proton gradient across the mitochondrial membrane that is then used for ATP synthesis. The sequence is that of Cytochrome b (MT-CYB) from Hemachatus haemachatus (Rinkhals).